The primary structure comprises 402 residues: 3-dehydroquinate synthase (402 aa).

It belongs to the archaeal-type DHQ synthase family.

It carries out the reaction 2-amino-2,3,7-trideoxy-D-lyxo-hept-6-ulosonate + NAD(+) + H2O = 3-dehydroquinate + NH4(+) + NADH + H(+). Catalyzes the oxidative deamination and cyclization of 2-amino-3,7-dideoxy-D-threo-hept-6-ulosonic acid (ADH) to yield 3-dehydroquinate (DHQ), which is fed into the canonical shikimic pathway of aromatic amino acid biosynthesis. This is 3-dehydroquinate synthase from Methanopyrus kandleri (strain AV19 / DSM 6324 / JCM 9639 / NBRC 100938).